Reading from the N-terminus, the 147-residue chain is UPF0306 protein YhbP (147 aa).

The protein belongs to the UPF0306 family.

This Salmonella arizonae (strain ATCC BAA-731 / CDC346-86 / RSK2980) protein is UPF0306 protein YhbP.